The primary structure comprises 428 residues: Immunoglobulin superfamily containing leucine-rich repeat protein (428 aa).

The N-terminal stretch at 1-18 is a signal peptide; that stretch reads MQELHLLWWALLLGLAQA. Residues 19-50 form the LRRNT domain; that stretch reads CPEPCDCGEKYGFQIADCAYRDLEAVPPGFPA. N51 carries N-linked (GlcNAc...) asparagine glycosylation. LRR repeat units lie at residues 51 to 72, 75 to 96, 99 to 122, 123 to 144, and 147 to 168; these read NVTA…AFRE, LLQS…ALAS, HLKS…HNLS, ALQL…AFRS, and ALRS…TFTP. The LRRCT domain occupies 180-231; sequence NPFDCTCGIVWLKTWALATAVSIPEQDNIACTSPHVLKGTPLSRLPPLPCSA. The region spanning 232–343 is the Ig-like domain; the sequence is PSVQLSYQPS…GSAESSVDVA (112 aa). A disulfide bridge links C257 with C327. N309 carries an N-linked (GlcNAc...) asparagine glycan.

It is found in the secreted. This Pongo abelii (Sumatran orangutan) protein is Immunoglobulin superfamily containing leucine-rich repeat protein (ISLR).